Consider the following 163-residue polypeptide: Cyanate hydratase (163 aa).

Catalysis depends on residues Arg-103, Glu-106, and Ser-129.

Belongs to the cyanase family.

It catalyses the reaction cyanate + hydrogencarbonate + 3 H(+) = NH4(+) + 2 CO2. Its function is as follows. Catalyzes the reaction of cyanate with bicarbonate to produce ammonia and carbon dioxide. The polypeptide is Cyanate hydratase (Ajellomyces dermatitidis (strain ER-3 / ATCC MYA-2586) (Blastomyces dermatitidis)).